The following is an 838-amino-acid chain: Leucine--tRNA ligase (838 aa).

The 'HIGH' region motif lies at 36–46; it reads PYPSGKIHMGH. Residues 611-615 carry the 'KMSKS' region motif; the sequence is KMSKS. K614 contributes to the ATP binding site.

Belongs to the class-I aminoacyl-tRNA synthetase family.

The protein localises to the cytoplasm. The enzyme catalyses tRNA(Leu) + L-leucine + ATP = L-leucyl-tRNA(Leu) + AMP + diphosphate. The protein is Leucine--tRNA ligase of Wolbachia sp. subsp. Drosophila simulans (strain wRi).